Consider the following 72-residue polypeptide: SPbeta prophage-derived uncharacterized protein YoqN (72 aa).

The chain is SPbeta prophage-derived uncharacterized protein YoqN (yoqN) from Bacillus subtilis (strain 168).